We begin with the raw amino-acid sequence, 177 residues long: Small ribosomal subunit protein uS13 (177 aa).

Basic residues predominate over residues 132–145 (GVRHKRGQKVRGQR). The segment at 132 to 177 (GVRHKRGQKVRGQRTKSTGRTEGTIGVNVEAIKEEQAEDAAAEDDE) is disordered. Residues 167–177 (QAEDAAAEDDE) are compositionally biased toward acidic residues.

Belongs to the universal ribosomal protein uS13 family. Part of the 30S ribosomal subunit. Forms a loose heterodimer with protein S19. Forms two bridges to the 50S subunit in the 70S ribosome.

Its function is as follows. Located at the top of the head of the 30S subunit, it contacts several helices of the 16S rRNA. In the 70S ribosome it contacts the 23S rRNA (bridge B1a) and protein L5 of the 50S subunit (bridge B1b), connecting the 2 subunits; these bridges are implicated in subunit movement. The polypeptide is Small ribosomal subunit protein uS13 (Haloarcula marismortui (strain ATCC 43049 / DSM 3752 / JCM 8966 / VKM B-1809) (Halobacterium marismortui)).